The sequence spans 163 residues: Lipoprotein signal peptidase (163 aa).

4 consecutive transmembrane segments (helical) span residues 5-25, 37-57, 67-87, and 91-111; these read VLTF…TKSL, IIPG…FGML, LMLV…VFKS, and LSNL…GNLY. Catalysis depends on residues D121 and D139. A helical transmembrane segment spans residues 132–152; the sequence is WPAFNVADASITIGIALFIGY.

This sequence belongs to the peptidase A8 family.

Its subcellular location is the cell inner membrane. The catalysed reaction is Release of signal peptides from bacterial membrane prolipoproteins. Hydrolyzes -Xaa-Yaa-Zaa-|-(S,diacylglyceryl)Cys-, in which Xaa is hydrophobic (preferably Leu), and Yaa (Ala or Ser) and Zaa (Gly or Ala) have small, neutral side chains.. The protein operates within protein modification; lipoprotein biosynthesis (signal peptide cleavage). In terms of biological role, this protein specifically catalyzes the removal of signal peptides from prolipoproteins. This chain is Lipoprotein signal peptidase, found in Sulfurihydrogenibium sp. (strain YO3AOP1).